The chain runs to 404 residues: Proteasomal ubiquitin receptor ADRM1-B (404 aa).

Residues 17–130 (SSSKYLVEFR…RKVNEYLNNP (114 aa)) enclose the Pru domain. 3 disordered regions span residues 128–149 (NNPP…LSAL), 195–258 (GSGG…TSPT), and 376–404 (FAKA…MSLD). Residues 195-247 (GSGGPTTSSSSSSSRSQSAAVTPSSTTSSTRTTSAPVAPAAAPATTPSPAVSS) are compositionally biased toward low complexity. The span at 248–258 (NDGASAATSPT) shows a compositional bias: polar residues. The DEUBAD domain occupies 278 to 390 (TGEGGQQVDL…QSTSSQKERE (113 aa)). A compositionally biased stretch (basic and acidic residues) spans 386 to 395 (QKERESSEKK).

It belongs to the ADRM1 family. Component of the 19S proteasome regulatory particle complex. The 26S proteasome consists of a 20S core particle (CP) and two 19S regulatory subunits (RP).

Its subcellular location is the cytoplasm. It is found in the nucleus. Its function is as follows. Component of the 26S proteasome, a multiprotein complex involved in the ATP-dependent degradation of ubiquitinated proteins. This complex plays a key role in the maintenance of protein homeostasis by removing misfolded or damaged proteins, which could impair cellular functions, and by removing proteins whose functions are no longer required. Therefore, the proteasome participates in numerous cellular processes, including cell cycle progression, apoptosis, or DNA damage repair. Within the complex, functions as a proteasomal ubiquitin receptor. This is Proteasomal ubiquitin receptor ADRM1-B (adrm1-b) from Xenopus laevis (African clawed frog).